The following is a 528-amino-acid chain: Protein spinster homolog 1 (528 aa).

Positions 1 to 38 (MAGSDTAPFLSQADDPDDGPAPGHPGLPGPMGNPKSGE) are disordered. Residue Ala2 is modified to N-acetylalanine. The next 12 helical transmembrane spans lie at 60 to 80 (LIVV…FTVA), 98 to 118 (GLIQ…FGYL), 126 to 146 (YLMC…SFIP), 160 to 180 (VGVG…DLFV), 187 to 207 (MLSI…IAGS), 218 to 238 (WALR…FLVV), 278 to 298 (LGFT…PAFL), 323 to 343 (LIFG…GVEI), 357 to 377 (LVCA…LACA), 381 to 401 (IVAT…NWAI), 421 to 441 (FQIV…IGLI), and 465 to 485 (MLCA…AMFI). Ser518 bears the Phosphoserine mark.

Belongs to the major facilitator superfamily. Spinster (TC 2.A.1.49) family. As to quaternary structure, interacts with BCL2 and BCL2L1. As to expression, expressed in liver (at mRNA and protein levels).

The protein localises to the lysosome membrane. It carries out the reaction a 1-acyl-sn-glycero-3-phosphocholine(out) + H(+)(out) = a 1-acyl-sn-glycero-3-phosphocholine(in) + H(+)(in). It catalyses the reaction 1-hexadecanoyl-sn-glycero-3-phosphocholine(out) + H(+)(out) = 1-hexadecanoyl-sn-glycero-3-phosphocholine(in) + H(+)(in). The enzyme catalyses 1-(9Z-octadecenoyl)-sn-glycero-3-phosphocholine(out) + H(+)(out) = 1-(9Z-octadecenoyl)-sn-glycero-3-phosphocholine(in) + H(+)(in). The catalysed reaction is 1-(5Z,8Z,11Z,14Z-eicosatetraenoyl)-sn-glycero-3-phosphocholine(out) + H(+)(out) = 1-(5Z,8Z,11Z,14Z-eicosatetraenoyl)-sn-glycero-3-phosphocholine(in) + H(+)(in). It carries out the reaction 1-(4Z,7Z,10Z,13Z,16Z,19Z-docosahexaenoyl)-sn-glycero-3-phosphocholine(out) + H(+)(out) = 1-(4Z,7Z,10Z,13Z,16Z,19Z-docosahexaenoyl)-sn-glycero-3-phosphocholine(in) + H(+)(in). It catalyses the reaction a 1-acyl-sn-glycero-3-phosphoethanolamine(out) + H(+)(out) = a 1-acyl-sn-glycero-3-phosphoethanolamine(in) + H(+)(in). The enzyme catalyses 1-(9Z-octadecenoyl)-sn-glycero-3-phosphoethanolamine(out) + H(+)(out) = 1-(9Z-octadecenoyl)-sn-glycero-3-phosphoethanolamine(in) + H(+)(in). The catalysed reaction is 1-acyl-sn-glycero-3-phospho-(1'-sn-glycerol)(out) + H(+)(out) = 1-acyl-sn-glycero-3-phospho-(1'-sn-glycerol)(in) + H(+)(in). It carries out the reaction 1-(9Z-octadecenoyl)-sn-glycero-3-phospho-(1'-sn-glycerol)(out) + H(+)(out) = 1-(9Z-octadecenoyl)-sn-glycero-3-phospho-(1'-sn-glycerol)(in) + H(+)(in). It catalyses the reaction a 1-O-(1Z-alkenyl)-sn-glycero-3-phosphocholine(out) + H(+)(out) = a 1-O-(1Z-alkenyl)-sn-glycero-3-phosphocholine(in) + H(+)(in). The enzyme catalyses 1-(1Z-hexadecenyl)-sn-glycero-3-phosphocholine(out) + H(+)(out) = 1-(1Z-hexadecenyl)-sn-glycero-3-phosphocholine(in) + H(+)(in). The catalysed reaction is a 1-O-(1Z-alkenyl)-sn-glycero-3-phosphoethanolamine(out) + H(+)(out) = a 1-O-(1Z-alkenyl)-sn-glycero-3-phosphoethanolamine(in) + H(+)(in). It carries out the reaction 1-O-(1Z-hexadecenyl)-sn-glycero-3-phosphoethanolamine(out) + H(+)(out) = 1-O-(1Z-hexadecenyl)-sn-glycero-3-phosphoethanolamine(in) + H(+)(in). Functionally, plays a critical role in the phospholipid salvage pathway from lysosomes to the cytosol. Mediates the rate-limiting, proton-dependent, lysosomal efflux of lysophospholipids, which can then be reacylated by acyltransferases in the endoplasmic reticulum to form phospholipids. Selective for zwitterionic headgroups such as lysophosphatidylcholine (LPC) and lysophosphatidylethanolamine (LPE), can also transport lysophosphatidylglycerol (LPG), but not other anionic lysophospholipids, sphingosine, nor sphingomyelin. Transports lysophospholipids with saturated, monounsaturated, and polyunsaturated fatty acids, such as 1-hexadecanoyl-sn-glycero-3-phosphocholine, 1-(9Z-octadecenoyl)-sn-glycero-3-phosphocholine and 1-(4Z,7Z,10Z,13Z,16Z,19Z-docosahexaenoyl)-sn-glycero-3-phosphocholine, respectively. Can also transport lysoplasmalogen (LPC with a fatty alcohol) such as 1-(1Z-hexadecenyl)-sn-glycero-3-phosphocholine. Essential player in lysosomal homeostasis. Crucial for cell survival under conditions of nutrient limitation. May be involved in necrotic or autophagic cell death. In Mus musculus (Mouse), this protein is Protein spinster homolog 1 (Spns1).